A 143-amino-acid polypeptide reads, in one-letter code: Large ribosomal subunit protein uL11 (143 aa).

It belongs to the universal ribosomal protein uL11 family. Part of the ribosomal stalk of the 50S ribosomal subunit. Interacts with L10 and the large rRNA to form the base of the stalk. L10 forms an elongated spine to which L12 dimers bind in a sequential fashion forming a multimeric L10(L12)X complex. Post-translationally, one or more lysine residues are methylated.

Forms part of the ribosomal stalk which helps the ribosome interact with GTP-bound translation factors. This is Large ribosomal subunit protein uL11 from Paraburkholderia xenovorans (strain LB400).